A 269-amino-acid polypeptide reads, in one-letter code: MYDLPLIDNLPVIKRARFFYLYDIHGKRYLDLYLNGGRNFLGYRVQGLNRLFKQTMSRGLISPYPSVFKNQFINLVFTFFKEAGSVYIFKLEKDAKEFLLSLTGKNKFFMPWEKEEGIYEFRVGFSNIKYPMIFNIPLPDFMSVSIVVMDNLSRKIEFKDNFDAVTLSLARHTLSKLLFYKKNIDIDFNSFATPLFRIADRYMLPLYDACYHAEIFNEFLKFGYLISPNFSIPSIVPLKFSKGDLDNFKKLCFALKNKFIDGLDSDPYK.

This sequence to T.pallidum TP0678.

This is an uncharacterized protein from Borreliella burgdorferi (strain ATCC 35210 / DSM 4680 / CIP 102532 / B31) (Borrelia burgdorferi).